The sequence spans 529 residues: Peptide chain release factor 3 (529 aa).

The tr-type G domain maps to 11–280 (SKRRTFAIIS…GLTDWAPAPL (270 aa)). GTP is bound by residues 20-27 (SHPDAGKT), 88-92 (DTPGH), and 142-145 (NKLD).

The protein belongs to the TRAFAC class translation factor GTPase superfamily. Classic translation factor GTPase family. PrfC subfamily.

The protein localises to the cytoplasm. Its function is as follows. Increases the formation of ribosomal termination complexes and stimulates activities of RF-1 and RF-2. It binds guanine nucleotides and has strong preference for UGA stop codons. It may interact directly with the ribosome. The stimulation of RF-1 and RF-2 is significantly reduced by GTP and GDP, but not by GMP. The chain is Peptide chain release factor 3 from Vibrio vulnificus (strain YJ016).